A 92-amino-acid chain; its full sequence is MARSIWKGPFVDGYLLKKADASRATGRSEVIKIWSRRSTILPQFVGLTFGVYNGHKHVPVNVTEEMIGHKFGEFSPTRTFHGHSADKKARRG.

This sequence belongs to the universal ribosomal protein uS19 family.

Its function is as follows. Protein S19 forms a complex with S13 that binds strongly to the 16S ribosomal RNA. This Methylocella silvestris (strain DSM 15510 / CIP 108128 / LMG 27833 / NCIMB 13906 / BL2) protein is Small ribosomal subunit protein uS19.